The sequence spans 1030 residues: Alpha-L-rhamnosidase (1030 aa).

The segment at 133-297 (PSLEGSSWIW…GAGPWGRVAP (165 aa)) is carbohydrate-binding module-67 (CBM67). Positions 179 and 180 each coordinate Ca(2+). Alpha-L-rhamnose is bound by residues 179–180 (DN) and W203. Ca(2+) is bound by residues N228 and P233. Alpha-L-rhamnose contacts are provided by residues D630, 634 to 636 (RDE), D643, and W695. The active-site Proton donor is the E636. E895 acts as the Proton acceptor in catalysis. H916 contacts alpha-L-rhamnose.

The protein belongs to the glycosyl hydrolase 78 family.

It catalyses the reaction Hydrolysis of terminal non-reducing alpha-L-rhamnose residues in alpha-L-rhamnosides.. In terms of biological role, alpha-L-rhamnosidase which is able to degrade p-nitrophenyl-alpha-L-rhamnopyranoside (PNP-Rha) in vitro. Releases L-rhamnose from citrus flavonoids such as naringin, rutin and hesperidin, and the arabinogalactan-protein (AGP) gum arabic. AGPs are a family of proteoglycans that are localized on the cell surfaces of higher plants. Cleaves both the alpha-1,6 and the alpha-1,2-linked rhamnosyl residues. The sequence is that of Alpha-L-rhamnosidase from Streptomyces avermitilis (strain ATCC 31267 / DSM 46492 / JCM 5070 / NBRC 14893 / NCIMB 12804 / NRRL 8165 / MA-4680).